The chain runs to 357 residues: UPF0283 membrane protein HS_0596 (357 aa).

A run of 3 helical transmembrane segments spans residues 67 to 87 (LMAT…QWLV), 96 to 116 (IAFV…GAII), and 213 to 233 (AVES…MFFI).

It belongs to the UPF0283 family.

The protein localises to the cell inner membrane. This Histophilus somni (strain 129Pt) (Haemophilus somnus) protein is UPF0283 membrane protein HS_0596.